Reading from the N-terminus, the 257-residue chain is General L-amino acid transport ATP-binding protein AapP (257 aa).

The ABC transporter domain occupies 18–252 (VEIVNMNKWY…PQHERTKLFL (235 aa)). Position 50-57 (50-57 (GPSGSGKS)) interacts with ATP.

The protein belongs to the ABC transporter superfamily.

Functionally, part of a binding-protein-dependent transport system for L-amino acids, affects the uptake as well as the efflux of these amino acids. Probably responsible for energy coupling to the transport system. The sequence is that of General L-amino acid transport ATP-binding protein AapP (aapP) from Rhizobium johnstonii (strain DSM 114642 / LMG 32736 / 3841) (Rhizobium leguminosarum bv. viciae).